The primary structure comprises 352 residues: Dihydrorhizobitoxine desaturase (352 aa).

The next 3 membrane-spanning stretches (helical) occupy residues 53–73, 89–109, and 204–224; these read LATLCVSWWLYPLAVLLIGAY, LAKNTTWNYVLGILFAAYPLF, and IGILAGSYALGLLHIVILFWI.

It belongs to the fatty acid desaturase type 1 family.

It is found in the cell inner membrane. It catalyses the reaction dihydrorhizobitoxine + 2 reduced [2Fe-2S]-[ferredoxin] + O2 + 2 H(+) = rhizobitoxine + 2 oxidized [2Fe-2S]-[ferredoxin] + 2 H2O. In terms of biological role, involved in the biosynthesis of the nodulation enhancer compound rhizobitoxine. Catalyzes the final step of the pathway, the introduction of a carbon double bond into the C3 position of dihydrorhizobitoxine to produce rhizobitoxine. This Bradyrhizobium elkanii protein is Dihydrorhizobitoxine desaturase.